We begin with the raw amino-acid sequence, 250 residues long: Triosephosphate isomerase (250 aa).

Residue 9–11 (NWK) participates in substrate binding. The active-site Electrophile is the His-100. The active-site Proton acceptor is Glu-169. Substrate contacts are provided by residues Gly-175, Ser-208, and 229 to 230 (GG).

It belongs to the triosephosphate isomerase family. As to quaternary structure, homodimer.

It is found in the cytoplasm. The enzyme catalyses D-glyceraldehyde 3-phosphate = dihydroxyacetone phosphate. Its pathway is carbohydrate biosynthesis; gluconeogenesis. The protein operates within carbohydrate degradation; glycolysis; D-glyceraldehyde 3-phosphate from glycerone phosphate: step 1/1. Its function is as follows. Involved in the gluconeogenesis. Catalyzes stereospecifically the conversion of dihydroxyacetone phosphate (DHAP) to D-glyceraldehyde-3-phosphate (G3P). This is Triosephosphate isomerase from Synechococcus sp. (strain JA-2-3B'a(2-13)) (Cyanobacteria bacterium Yellowstone B-Prime).